A 1060-amino-acid polypeptide reads, in one-letter code: Carbamoyl phosphate synthase large chain (1060 aa).

Residues 1–401 (MPKRTDIRKI…SLLKACRSLE (401 aa)) are carboxyphosphate synthetic domain. ATP-binding residues include arginine 129, arginine 169, glycine 175, glycine 176, arginine 208, isoleucine 210, glutamate 215, glycine 241, isoleucine 242, histidine 243, glutamine 284, and glutamate 298. The ATP-grasp 1 domain occupies 133–327 (KQLMEELNQP…IAKLAAKIAV (195 aa)). Residues glutamine 284, glutamate 298, and asparagine 300 each coordinate Mg(2+). Mn(2+)-binding residues include glutamine 284, glutamate 298, and asparagine 300. The interval 402 to 546 (IGVDHIKIAD…YSTYAVENES (145 aa)) is oligomerization domain. Residues 547–929 (LISDKASILV…ALYKAFEAAY (383 aa)) are carbamoyl phosphate synthetic domain. Residues 671–861 (EATLQALNIP…MAQVATKVIL (191 aa)) form the ATP-grasp 2 domain. Positions 707, 746, 748, 752, 777, 778, 779, 780, 820, and 832 each coordinate ATP. Residues glutamine 820, glutamate 832, and asparagine 834 each contribute to the Mg(2+) site. Mn(2+) is bound by residues glutamine 820, glutamate 832, and asparagine 834. The region spanning 930 to 1060 (LHMPDYGNIV…SRAFTLKVLD (131 aa)) is the MGS-like domain. An allosteric domain region spans residues 930–1060 (LHMPDYGNIV…SRAFTLKVLD (131 aa)).

It belongs to the CarB family. As to quaternary structure, composed of two chains; the small (or glutamine) chain promotes the hydrolysis of glutamine to ammonia, which is used by the large (or ammonia) chain to synthesize carbamoyl phosphate. Tetramer of heterodimers (alpha,beta)4. Requires Mg(2+) as cofactor. Mn(2+) is required as a cofactor.

It catalyses the reaction hydrogencarbonate + L-glutamine + 2 ATP + H2O = carbamoyl phosphate + L-glutamate + 2 ADP + phosphate + 2 H(+). The catalysed reaction is hydrogencarbonate + NH4(+) + 2 ATP = carbamoyl phosphate + 2 ADP + phosphate + 2 H(+). It functions in the pathway amino-acid biosynthesis; L-arginine biosynthesis; carbamoyl phosphate from bicarbonate: step 1/1. Its pathway is pyrimidine metabolism; UMP biosynthesis via de novo pathway; (S)-dihydroorotate from bicarbonate: step 1/3. Its function is as follows. Large subunit of the glutamine-dependent carbamoyl phosphate synthetase (CPSase). CPSase catalyzes the formation of carbamoyl phosphate from the ammonia moiety of glutamine, carbonate, and phosphate donated by ATP, constituting the first step of 2 biosynthetic pathways, one leading to arginine and/or urea and the other to pyrimidine nucleotides. The large subunit (synthetase) binds the substrates ammonia (free or transferred from glutamine from the small subunit), hydrogencarbonate and ATP and carries out an ATP-coupled ligase reaction, activating hydrogencarbonate by forming carboxy phosphate which reacts with ammonia to form carbamoyl phosphate. This Streptococcus agalactiae serotype V (strain ATCC BAA-611 / 2603 V/R) protein is Carbamoyl phosphate synthase large chain.